The chain runs to 117 residues: Large ribosomal subunit protein bL19 (117 aa).

The protein belongs to the bacterial ribosomal protein bL19 family.

This protein is located at the 30S-50S ribosomal subunit interface and may play a role in the structure and function of the aminoacyl-tRNA binding site. The protein is Large ribosomal subunit protein bL19 of Vesicomyosocius okutanii subsp. Calyptogena okutanii (strain HA).